Here is a 323-residue protein sequence, read N- to C-terminus: Fructose-1,6-bisphosphatase class 1 (323 aa).

4 residues coordinate Mg(2+): E88, D107, L109, and D110. Substrate contacts are provided by residues D110–S113 and N200. Position 272 (E272) interacts with Mg(2+).

This sequence belongs to the FBPase class 1 family. As to quaternary structure, homotetramer. The cofactor is Mg(2+).

Its subcellular location is the cytoplasm. The catalysed reaction is beta-D-fructose 1,6-bisphosphate + H2O = beta-D-fructose 6-phosphate + phosphate. It functions in the pathway carbohydrate biosynthesis; gluconeogenesis. This chain is Fructose-1,6-bisphosphatase class 1, found in Acinetobacter baylyi (strain ATCC 33305 / BD413 / ADP1).